Consider the following 478-residue polypeptide: Glutamyl-tRNA(Gln) amidotransferase subunit A (478 aa).

Catalysis depends on charge relay system residues Lys-72 and Ser-147. Catalysis depends on Ser-171, which acts as the Acyl-ester intermediate.

This sequence belongs to the amidase family. GatA subfamily. As to quaternary structure, heterotrimer of A, B and C subunits.

The catalysed reaction is L-glutamyl-tRNA(Gln) + L-glutamine + ATP + H2O = L-glutaminyl-tRNA(Gln) + L-glutamate + ADP + phosphate + H(+). In terms of biological role, allows the formation of correctly charged Gln-tRNA(Gln) through the transamidation of misacylated Glu-tRNA(Gln) in organisms which lack glutaminyl-tRNA synthetase. The reaction takes place in the presence of glutamine and ATP through an activated gamma-phospho-Glu-tRNA(Gln). This Saccharolobus solfataricus (strain ATCC 35092 / DSM 1617 / JCM 11322 / P2) (Sulfolobus solfataricus) protein is Glutamyl-tRNA(Gln) amidotransferase subunit A.